The chain runs to 1004 residues: uncharacterized protein (1004 aa).

A glycan (N-linked (GlcNAc...) asparagine) is linked at Asn27. The next 4 membrane-spanning stretches (helical) occupy residues 38–58, 77–97, 188–208, and 324–344; these read FGFSLNPVLWCLDHQQGLLAI, IVPDCSTIVHIALCAAYLIVI, LSPVVSVQIHPKDLGVILIAY, and FILMLGGLPKEAPVKGISLFS. 3 N-linked (GlcNAc...) asparagine glycosylation sites follow: Asn392, Asn418, and Asn421. The next 2 helical transmembrane spans lie at 422-442 and 599-619; these read MSLSIPPSLCFLASDFRVIAF and MSNIGFVCIGYQDGGITIIDM. N-linked (GlcNAc...) asparagine glycosylation is present at Asn627. 2 helical membrane-spanning segments follow: residues 726 to 746 and 823 to 843; these read GYPLPQEVFLVYIGDSGISVF and GDYIFPTLGAHELAFGCVLGS. A glycan (N-linked (GlcNAc...) asparagine) is linked at Asn859.

The protein to yeast YPR031w.

It is found in the membrane. This is an uncharacterized protein from Schizosaccharomyces pombe (strain 972 / ATCC 24843) (Fission yeast).